Reading from the N-terminus, the 646-residue chain is Long-chain fatty acid transport protein 1 (646 aa).

Residues 1–13 are Extracellular-facing; that stretch reads MRTPGAGTASVAS. A helical membrane pass occupies residues 14-34; that stretch reads LGLLWLLGLPWTWSAAAAFGV. Residues 35-646 are Cytoplasmic-facing; that stretch reads YVGSGGWRFL…ARICAGDFSL (612 aa). The segment at 191-475 is sufficient for oligomerization; the sequence is EVSEQLGKSL…YVSDSATNKK (285 aa). 246–257 is a binding site for AMP; sequence YIYTSGTTGLPK.

This sequence belongs to the ATP-dependent AMP-binding enzyme family. In terms of assembly, self-associates. May function as a homodimer. Interacts with EPRS1; mediates the translocation of SLC27A1 from the cytoplasm to the plasma membrane thereby increasing the uptake of long-chain fatty acids. Interacts with DGAT2 and this interaction is enhanced in the presence of ZFYVE1. As to expression, expressed in muscle.

The protein localises to the cell membrane. Its subcellular location is the endomembrane system. It is found in the cytoplasm. It carries out the reaction a fatty acid(in) = a fatty acid(out). The catalysed reaction is (9Z)-octadecenoate(out) = (9Z)-octadecenoate(in). It catalyses the reaction hexadecanoate(out) = hexadecanoate(in). The enzyme catalyses (5Z,8Z,11Z,14Z)-eicosatetraenoate(out) = (5Z,8Z,11Z,14Z)-eicosatetraenoate(in). It carries out the reaction (9Z,12Z)-octadecadienoate(out) = (9Z,12Z)-octadecadienoate(in). The catalysed reaction is a long-chain fatty acid + ATP + CoA = a long-chain fatty acyl-CoA + AMP + diphosphate. It catalyses the reaction (5Z,8Z,11Z,14Z)-eicosatetraenoate + ATP + CoA = (5Z,8Z,11Z,14Z)-eicosatetraenoyl-CoA + AMP + diphosphate. The enzyme catalyses a very long-chain fatty acid + ATP + CoA = a very long-chain fatty acyl-CoA + AMP + diphosphate. It carries out the reaction tetracosanoate + ATP + CoA = tetracosanoyl-CoA + AMP + diphosphate. Its activity is regulated as follows. Inhibited by Triacsin C. Mediates the import of long-chain fatty acids (LCFA) into the cell by facilitating their transport at the plasma membrane. Also functions as an acyl-CoA ligase catalyzing the ATP-dependent formation of fatty acyl-CoA using LCFA and very-long-chain fatty acids (VLCFA) as substrates, which prevents fatty acid efflux from cells and might drive more fatty acid uptake. May act directly as a bona fide transporter, or alternatively, in a cytoplasmic or membrane-associated multimeric protein complex to trap and draw fatty acids towards accumulation. Plays a pivotal role in regulating available LCFA substrates from exogenous sources in tissues undergoing high levels of beta-oxidation or triglyceride synthesis. May be involved in regulation of cholesterol metabolism. Probably involved in fatty acid transport across the blood barrier. The polypeptide is Long-chain fatty acid transport protein 1 (Rattus norvegicus (Rat)).